The chain runs to 366 residues: Trans-enoyl reductase caaB (366 aa).

The Enoyl reductase (ER) domain maps to 19 to 363 (GAGQLSIYHD…RQTVSGHKLV (345 aa)). Tyr219 contributes to the NADP(+) binding site.

The protein belongs to the zinc-containing alcohol dehydrogenase family. In terms of assembly, monomer.

It functions in the pathway secondary metabolite biosynthesis. Functionally, trans-enoyl reductase; part of the gene cluster that produces the acyltetronic acid derivatives carlosic acid, agglomerin F and carlosic acid methyl ether. The PKS domains of caaA condenses two malonyl-CoAs into an acetyl starter unit, and form 1,3-diketohexanyl-ACP with the help of the trans-enoyl reductase caaB. Next, the C domain of caaA forms the ester bond between the acyl chain and L-malic acid (derived from the TCA cycle) and accepted by the A domain instead of an amino acid. Finally, the terminal reductase/Dieckmann cyclization (R/DKC) domain cyclizes the intermediate and releases the product as carlosic acid. Decarboxylation of carlosic acid followed by formation of the exocyclic double bond is likely to be catalyzed by the cytochrome P450 monooxygenase caaC. Thus, decarboxylation and oxidation would be coupled (performed by one enzyme) through concomitant abstraction of the hydrogen at C-4. Finally, sequential oxidations of the terminal C-10 methyl group to form carboxylic acid would be catalyzed by the 2-oxoglutarate-dependent dioxygenase caaD, which is required for the biosynthesis of agglomerin F. In Aspergillus niger (strain ATCC MYA-4892 / CBS 513.88 / FGSC A1513), this protein is Trans-enoyl reductase caaB.